The chain runs to 736 residues: Zinc finger CCCH domain-containing protein 14 (736 aa).

Residue M1 is modified to N-acetylmethionine. Residues 77–103 (TTEPSSLKSPDTSIFDSNVPSNKSSFS) show a composition bias toward polar residues. Positions 77–153 (TTEPSSLKSP…RHSYDDGAST (77 aa)) are disordered. S85 is modified (phosphoserine). Residues K99, K139, K175, and K198 each participate in a glycyl lysine isopeptide (Lys-Gly) (interchain with G-Cter in SUMO2) cross-link. Basic and acidic residues predominate over residues 123–148 (RPEKRDSRVSTSSQEHKSTNVRHSYD). Residue S240 is modified to Phosphoserine. Residues K245, K283, and K295 each participate in a glycyl lysine isopeptide (Lys-Gly) (interchain with G-Cter in SUMO2) cross-link. The tract at residues 308–350 (FSHDGEEEEEDEDYGTRVGSLSSSVSVPAKPERRPSLPPSKQA) is disordered. A phosphoserine mark is found at S309, S327, and S343. K357 carries the N6-acetyllysine; alternate modification. K357 is covalently cross-linked (Glycyl lysine isopeptide (Lys-Gly) (interchain with G-Cter in SUMO2); alternate). Over residues 367–380 (TKTTNYPAVPQKQT) the composition is skewed to polar residues. Positions 367–386 (TKTTNYPAVPQKQTLPVAPR) are disordered. Residue K378 forms a Glycyl lysine isopeptide (Lys-Gly) (interchain with G-Cter in SUMO2) linkage. Phosphoserine occurs at positions 390 and 409. The interval 400–420 (QGQNRAPRISPPVKEEEAKGD) is disordered. Residues K413 and K489 each participate in a glycyl lysine isopeptide (Lys-Gly) (interchain with G-Cter in SUMO2) cross-link. A phosphoserine mark is found at S498, S515, S527, and S620. 5 consecutive C3H1-type zinc fingers follow at residues 595 to 620 (EKLL…HPIS), 621 to 640 (PCKA…VHPN), 641 to 656 (CKYD…PFTH), 682 to 699 (CRYF…YHPK), and 701 to 719 (CRFN…HPTI).

It belongs to the ZC3H14 family. As to quaternary structure, homodimer; facilitating circular RNAs (circRNAs) formation. Associates with the spliceosome. Interacts with HOOK2. Interacts with ZFC3H1 in a RNase-sensitive manner.

The protein localises to the nucleus speckle. Functionally, RNA-binding protein involved in the biogenesis of circular RNAs (circRNAs), which are produced by back-splicing circularization of pre-mRNAs. Acts by binding to both exon-intron boundary and 3'-UTR of pre-mRNAs to promote circRNA biogenesis through dimerization and the association with the spliceosome. Required for spermatogenesis via involvement in circRNA biogenesis. Regulates the pre-mRNA processing of ATP5MC1; preventing its degradation. Also binds the poly(A) tail of mRNAs; controlling poly(A) length in neuronal cells. This chain is Zinc finger CCCH domain-containing protein 14, found in Rattus norvegicus (Rat).